We begin with the raw amino-acid sequence, 357 residues long: Set1 complex component swd2 (357 aa).

4 WD repeats span residues 24-65 (NFVG…KSLA), 110-149 (GHKQTVTSIDVSPADETFLSASLDNTIRLWDLRSPNCQGL), 199-241 (PPHV…RVPS), and 247-289 (TQDG…QTVN).

The protein belongs to the WD repeat SWD2 family. As to quaternary structure, component of the Set1 complex composed of ash2, sdc1, set1, shg1, spp1, swd1, swd2 and swd3.

It localises to the nucleus. Functionally, the Set1 complex specifically methylates 'Lys-4' of histone H3. The chain is Set1 complex component swd2 from Schizosaccharomyces pombe (strain 972 / ATCC 24843) (Fission yeast).